We begin with the raw amino-acid sequence, 613 residues long: Epsin-2 (613 aa).

Residues 11-143 form the ENTH domain; the sequence is NMMKGYSSTQ…NDEERLREER (133 aa). 3 disordered regions span residues 140-208, 323-351, and 356-375; these read REER…DDED, TAAN…PFSM, and RQKQ…EARQ. Residues 148 to 167 show a composition bias toward basic residues; that stretch reads RNRRANRAARPRPRRQRTRS. At Thr165 the chain carries Phosphothreonine. Ser167 is subject to Phosphoserine. 2 UIM domains span residues 175-194 and 206-225; these read SYQD…AQED and DEDP…EELK. The segment covering 179–188 has biased composition (basic and acidic residues); it reads DLEKALEESR. Over residues 323-339 the composition is skewed to low complexity; sequence TAANMQQQQQQPADFQQ. Positions 340–350 are enriched in polar residues; sequence PLPTGSNNPFS. Lys426 is covalently cross-linked (Glycyl lysine isopeptide (Lys-Gly) (interchain with G-Cter in ubiquitin)). Thr430 carries the post-translational modification Phosphothreonine. Ser434 carries the post-translational modification Phosphoserine. Thr450, Thr468, and Thr470 each carry phosphothreonine. Over residues 471-512 the composition is skewed to polar residues; it reads GTFINSQGTGYKQVTNEPKNNPFLSNQYTGLPSTNIVPTQTG. The segment at 471 to 613 is disordered; that stretch reads GTFINSQGTG…PDQGVSLIDL (143 aa). Positions 526-600 are enriched in low complexity; sequence SPQQNPTGIS…QQQQQQQQQQ (75 aa).

This sequence belongs to the epsin family. Post-translationally, phosphorylated by PRK1.

The protein resides in the cytoplasm. The protein localises to the membrane. Binds to membranes enriched in phosphatidylinositol 3,5-bisphosphate (PtdIns(3,5)P2) and phosphatidylinositol 4,5-bisphosphate (PtdIns(4,5)P2). Required for endocytosis and localization of actin. The chain is Epsin-2 (ENT2) from Saccharomyces cerevisiae (strain ATCC 204508 / S288c) (Baker's yeast).